Consider the following 911-residue polypeptide: MFAPLLKKLFGSKNEREVKRMLKTVNIVNAFEEKMVALSDEQLRAKTAEFKERLAKGETLDQLLPEAFAVAREAGKRVMGMRHFDVQLIGGMTLHEGMIAEMRTGEGKTLVGTLAVYLNALSGKGVHVVTVNDYLARRDANWMRPLYEFLGLSVGIVSAFQPPEEKRAAYASDITYGTNNEFGFDYLRDNMAFSLEEKFQRELNFAVIDEVDSILIDEARTPLIISGQAEDSSKLYIEINRLIPRLTQHIEEVEGQVTQEGHFTIDEKSRQVELNEAGHQFIEEMLTQSGLLAEGESLYSSHNLGLLTHVYAGLRAHKLFHRNVEYIVQDGQVLLIDEHTGRTMPGRRLSEGLHQAIEAKENLNIQAESQTLASTTFQNYFRLYTKLSGMTGTADTEAFEFQSIYGLNVMVIPPNKPLARKDFNDLVYLTADEKYAAIIADIKESMTQGRPVLVGTATIETSEHMSNLLKQEGIEHKVLNAKYHEKEAEIIAQAGAPGALTIATNMAGRGTDILLGGNWEAEVAALENPSPEQIAQIKADWQKRHQQVIESGGLHVIASERHESRRIDNQLRGRSGRQGDPGSSRFYLSLEDSLMRIFASDRVKNFMKALGMQSGEAIEHRMVTNAIEKAQRKVEGRNFDIRKQLLEYDDVANEQRKVIYHMRNSLLAAENIGDTIAEFRQEVLDATINQHIPPQSLPEQWDVAGLEASLASDFAIKLPIQQWLDEDDHLYEETLREKLLKEITDAYNEKEDQAGIDALRTFEKQILLRVLDDLWKDHLSTMDHLRHGIHLRGYAQKNPKQEYKRESFTLFQELLESIKRDTIRVLSHVQVRREDPVEEEARLRREAEELASRMQFQHAPAPGLESEQLSEEGAEVAVAVAPVRNDQKLGRNEPCWCGSGKKFKHCHGQIE.

Residues glutamine 87, 105-109 (GEGKT), and aspartate 512 contribute to the ATP site. Residues 561–571 (RHESRRIDNQL) show a composition bias toward basic and acidic residues. Residues 561-583 (RHESRRIDNQLRGRSGRQGDPGS) are disordered. Positions 895, 897, 906, and 907 each coordinate Zn(2+).

The protein belongs to the SecA family. In terms of assembly, monomer and homodimer. Part of the essential Sec protein translocation apparatus which comprises SecA, SecYEG and auxiliary proteins SecDF-YajC and YidC. It depends on Zn(2+) as a cofactor.

It localises to the cell inner membrane. Its subcellular location is the cytoplasm. The enzyme catalyses ATP + H2O + cellular proteinSide 1 = ADP + phosphate + cellular proteinSide 2.. In terms of biological role, part of the Sec protein translocase complex. Interacts with the SecYEG preprotein conducting channel. Has a central role in coupling the hydrolysis of ATP to the transfer of proteins into and across the cell membrane, serving both as a receptor for the preprotein-SecB complex and as an ATP-driven molecular motor driving the stepwise translocation of polypeptide chains across the membrane. This chain is Protein translocase subunit SecA, found in Pseudomonas putida (strain W619).